The following is a 178-amino-acid chain: Small ribosomal subunit protein uS5 (178 aa).

The S5 DRBM domain maps to 15-78; it reads FEEKIIEIRR…SAAKRNIIEV (64 aa).

This sequence belongs to the universal ribosomal protein uS5 family. Part of the 30S ribosomal subunit. Contacts proteins S4 and S8.

With S4 and S12 plays an important role in translational accuracy. Its function is as follows. Located at the back of the 30S subunit body where it stabilizes the conformation of the head with respect to the body. In Thermotoga sp. (strain RQ2), this protein is Small ribosomal subunit protein uS5.